An 87-amino-acid chain; its full sequence is Small ribosomal subunit protein bS20 (87 aa).

Residues 1–21 (MANHKSAEKRARQTIKKTERN) are disordered.

The protein belongs to the bacterial ribosomal protein bS20 family.

Functionally, binds directly to 16S ribosomal RNA. The chain is Small ribosomal subunit protein bS20 from Campylobacter jejuni subsp. jejuni serotype O:23/36 (strain 81-176).